Here is a 1193-residue protein sequence, read N- to C-terminus: DNA-directed RNA polymerase subunit beta (1193 aa).

A compositionally biased stretch (acidic residues) spans 1153 to 1162 (EMRDLEDDED). Residues 1153–1193 (EMRDLEDDEDAKQNEGLSLPNDEESEELVSADAERDVVTKE) are disordered. Basic and acidic residues predominate over residues 1184 to 1193 (DAERDVVTKE).

This sequence belongs to the RNA polymerase beta chain family. In terms of assembly, the RNAP catalytic core consists of 2 alpha, 1 beta, 1 beta' and 1 omega subunit. When a sigma factor is associated with the core the holoenzyme is formed, which can initiate transcription.

The enzyme catalyses RNA(n) + a ribonucleoside 5'-triphosphate = RNA(n+1) + diphosphate. Its function is as follows. DNA-dependent RNA polymerase catalyzes the transcription of DNA into RNA using the four ribonucleoside triphosphates as substrates. The sequence is that of DNA-directed RNA polymerase subunit beta from Bacillus licheniformis (strain ATCC 14580 / DSM 13 / JCM 2505 / CCUG 7422 / NBRC 12200 / NCIMB 9375 / NCTC 10341 / NRRL NRS-1264 / Gibson 46).